A 21-amino-acid polypeptide reads, in one-letter code: VTVYDAEGTKVQIDGSLRVEL.

In terms of assembly, disulfide bond interactions within and between MOMP molecules and other components form high molecular-weight oligomers.

Its subcellular location is the cell outer membrane. In terms of biological role, structural rigidity of the outer membrane of elementary bodies and porin forming, permitting diffusion of solutes through the intracellular reticulate body membrane. In Actinobacillus pleuropneumoniae (Haemophilus pleuropneumoniae), this protein is 40 kDa major outer membrane protein.